The primary structure comprises 89 residues: Large ribosomal subunit protein eL34 (89 aa).

This sequence belongs to the eukaryotic ribosomal protein eL34 family.

This Methanococcus vannielii (strain ATCC 35089 / DSM 1224 / JCM 13029 / OCM 148 / SB) protein is Large ribosomal subunit protein eL34.